Here is an 839-residue protein sequence, read N- to C-terminus: MAQFDTEYQRLEASYSDSPPGEEDLLVHVAEGSKSPWHHIENLDLFFSRVYNLHQKNGFTCMLIGEIFELMQFLFVVAFTTFLVSCVDYDILFANKMVNHSLHPTEPVKVTLPDAFLPAQVCSARIQENGSLITILVIAGVFWIHRLIKFIYNICCYWEIHSFYLHALRIPMSALPYCTWQEVQARIVQTQKEHQICIHKRELTELDIYHRILRFQNYMVALVNKSLLPLRFRLPGLGEAVFFTRGLKYNFELILFWGPGSLFLNEWSLKAEYKRGGQRLELAQRLSNRILWIGIANFLLCPLILIWQILYAFFSYAEVLKREPGALGARCWSLYGRCYLRHFNELEHELQSRLNRGYKPASKYMNCFLSPLLTLLAKNGAFFAGSILAVLIALTIYDEDVLAVEHVLTTVTLLGVTVTVCRSFIPDQHMVFCPEQLLRVILAHIHYMPDHWQGNAHRSQTRDEFAQLFQYKAVFILEELLSPIVTPLILIFCLRPRALEIIDFFRNFTVEVVGVGDTCSFAQMDVRQHGHPQWLSAGQTEASVYQQAEDGKTELSLMHFAITNPGWQPPRESTAFLGFLKEQVQRDGAAASLAQGGLLPENALFTSIQSLQSESEPLSLIANVVAGSSCRGPPLPRDLQGSRHRAEVASALRSFSPLQPGQAPTGRAHSTMTGSGVDARTASSGSSVWEGQLQSLVLSEYASTEMSLHALYMHQLHKQQAQAEPERHLWHRRESDESGESAPDEGGEGARAPQSIPRSASYPCAAPRPGAPETTALHGGFQRRYGGITDPGTVPRAPSHFSRLPLGGWAEDGQSASRHPEPVPEEGSEDELPPQVHKV.

Residues M1–P20 are disordered. The residue at position 2 (A2) is an N-acetylalanine. Over A2 to C61 the chain is Cytoplasmic. Positions Y8–L11 match the Tyrosine-based sorting signal motif. A phosphoserine mark is found at S14, S16, and S18. The chain crosses the membrane as a helical span at residues M62–V84. Over S85–E128 the chain is Lumenal. N99 carries an N-linked (GlcNAc...) asparagine glycan. Residues N129–I154 traverse the membrane as a helical segment. Residues C155–I290 are Cytoplasmic-facing. An intramembrane segment occupies L291 to C301. The Cytoplasmic portion of the chain corresponds to P302–V319. Residues L320–G328 lie within the membrane without spanning it. The Cytoplasmic segment spans residues A329 to P371. The chain crosses the membrane as a helical span at residues L372–Y397. Topologically, residues D398–H406 are lumenal. Residues V407–F424 traverse the membrane as a helical segment. At I425–Q470 the chain is on the cytoplasmic side. An intramembrane segment occupies Y471 to L480. At L481 to P483 the chain is on the cytoplasmic side. The stretch at I484–F492 is an intramembrane region. Topologically, residues C493–V839 are cytoplasmic. A phosphoserine mark is found at S656, S735, S738, S741, and S828. 2 disordered regions span residues S656–S686 and Q719–V839. Over residues E724–D736 the composition is skewed to basic and acidic residues. Composition is skewed to acidic residues over residues E737 to G747 and V823 to L832.

This sequence belongs to the ATG9 family. In terms of assembly, homotrimer; forms a homotrimer with a central pore that forms a path between the two membrane leaflets. Interacts (via cytoplasmic its C-terminus) with ATG2A. Interacts with SUPT20H. Interacts (via the tyrosine-based sorting signal motif) with AP4M1; promoting association with the AP-4 complex. Interacts with ARFIP1 and ARFIP2. Interacts with PI4K2A and PI4KB. Interacts with ATG4A; the interaction is direct and promotes ATG9A trafficking. In terms of processing, ufmylated in a DDRGK1 dependent manner.

Its subcellular location is the preautophagosomal structure membrane. The protein resides in the cytoplasmic vesicle. It is found in the autophagosome membrane. It localises to the golgi apparatus. The protein localises to the trans-Golgi network membrane. Its subcellular location is the late endosome membrane. The protein resides in the recycling endosome membrane. It is found in the endoplasmic reticulum membrane. It localises to the mitochondrion membrane. The catalysed reaction is a 1,2-diacyl-sn-glycero-3-phosphocholine(in) = a 1,2-diacyl-sn-glycero-3-phosphocholine(out). The enzyme catalyses a 1,2-diacyl-sn-glycero-3-phospho-L-serine(in) = a 1,2-diacyl-sn-glycero-3-phospho-L-serine(out). It catalyses the reaction a 1,2-diacyl-sn-glycero-3-phosphoethanolamine(in) = a 1,2-diacyl-sn-glycero-3-phosphoethanolamine(out). Its function is as follows. Phospholipid scramblase involved in autophagy by mediating autophagosomal membrane expansion. Cycles between the preautophagosomal structure/phagophore assembly site (PAS) and the cytoplasmic vesicle pool and supplies membrane for the growing autophagosome. Lipid scramblase activity plays a key role in preautophagosomal structure/phagophore assembly by distributing the phospholipids that arrive through ATG2 (ATG2A or ATG2B) from the cytoplasmic to the luminal leaflet of the bilayer, thereby driving autophagosomal membrane expansion. Also required to supply phosphatidylinositol 4-phosphate to the autophagosome initiation site by recruiting the phosphatidylinositol 4-kinase beta (PI4KB) in a process dependent on ARFIP2, but not ARFIP1. In addition to autophagy, also plays a role in necrotic cell death. This Pongo abelii (Sumatran orangutan) protein is Autophagy-related protein 9A.